The primary structure comprises 20 residues: Cytochrome c oxidase subunit 8B, mitochondrial (20 aa).

The protein belongs to the cytochrome c oxidase VIII family. In terms of assembly, component of the cytochrome c oxidase (complex IV, CIV), a multisubunit enzyme composed of 14 subunits. The complex is composed of a catalytic core of 3 subunits MT-CO1, MT-CO2 and MT-CO3, encoded in the mitochondrial DNA, and 11 supernumerary subunits COX4I, COX5A, COX5B, COX6A, COX6B, COX6C, COX7A, COX7B, COX7C, COX8 and NDUFA4, which are encoded in the nuclear genome. The complex exists as a monomer or a dimer and forms supercomplexes (SCs) in the inner mitochondrial membrane with NADH-ubiquinone oxidoreductase (complex I, CI) and ubiquinol-cytochrome c oxidoreductase (cytochrome b-c1 complex, complex III, CIII), resulting in different assemblies (supercomplex SCI(1)III(2)IV(1) and megacomplex MCI(2)III(2)IV(2)).

The protein resides in the mitochondrion inner membrane. The protein operates within energy metabolism; oxidative phosphorylation. Its function is as follows. Component of the cytochrome c oxidase, the last enzyme in the mitochondrial electron transport chain which drives oxidative phosphorylation. The respiratory chain contains 3 multisubunit complexes succinate dehydrogenase (complex II, CII), ubiquinol-cytochrome c oxidoreductase (cytochrome b-c1 complex, complex III, CIII) and cytochrome c oxidase (complex IV, CIV), that cooperate to transfer electrons derived from NADH and succinate to molecular oxygen, creating an electrochemical gradient over the inner membrane that drives transmembrane transport and the ATP synthase. Cytochrome c oxidase is the component of the respiratory chain that catalyzes the reduction of oxygen to water. Electrons originating from reduced cytochrome c in the intermembrane space (IMS) are transferred via the dinuclear copper A center (CU(A)) of subunit 2 and heme A of subunit 1 to the active site in subunit 1, a binuclear center (BNC) formed by heme A3 and copper B (CU(B)). The BNC reduces molecular oxygen to 2 water molecules using 4 electrons from cytochrome c in the IMS and 4 protons from the mitochondrial matrix. This is Cytochrome c oxidase subunit 8B, mitochondrial from Thunnus obesus (Bigeye tuna).